A 449-amino-acid polypeptide reads, in one-letter code: Exopolygalacturonase X-2 (449 aa).

Positions 1 to 24 (MGFKRTIGLLLGILLALDQVSVLA) are cleaved as a signal peptide. Asn-136, Asn-172, and Asn-208 each carry an N-linked (GlcNAc...) asparagine glycan. Residues 240 to 261 (SDNVVIQNSVINHDDDCVSFKP) form a PbH1 1 repeat. Asp-254 serves as the catalytic Proton donor. Residues Cys-256 and Cys-273 are joined by a disulfide bond. N-linked (GlcNAc...) asparagine glycosylation is found at Asn-262 and Asn-274. 2 PbH1 repeats span residues 263–283 (STNI…SVGS) and 294–315 (VSDL…RLKV). Residue His-277 is part of the active site. Residues Asn-301, Asn-306, Asn-340, and Asn-365 are each glycosylated (N-linked (GlcNAc...) asparagine). Cys-403 and Cys-409 are oxidised to a cystine. N-linked (GlcNAc...) asparagine glycans are attached at residues Asn-416 and Asn-421.

The protein belongs to the glycosyl hydrolase 28 family.

It is found in the secreted. It catalyses the reaction [(1-&gt;4)-alpha-D-galacturonosyl](n) + H2O = alpha-D-galacturonate + [(1-&gt;4)-alpha-D-galacturonosyl](n-1). In terms of biological role, specific in hydrolyzing the terminal glycosidic bond of polygalacturonic acid and oligogalacturonates. The chain is Exopolygalacturonase X-2 (pgaX-2) from Emericella nidulans (strain FGSC A4 / ATCC 38163 / CBS 112.46 / NRRL 194 / M139) (Aspergillus nidulans).